The following is a 427-amino-acid chain: MSVSFENKETNRGLLTFSISQEKIKPALDRVFNSVKKDIAVPGFRKGRLPRAIFNQRFGEEALYQDALNALLPEAYEAAVKEAGIEVVAQPQFDVESMEKGQDWVIKAEVVTKPEVKLGAYKDLEVTVEATKEVTDAEVDERIERERNNLAELVLKEGPAADGDTVVIDFVGSVDGVEFDGGKGDNFSLGLGSGQFIPGFEEQLVGHSAGETVDVVVTFPEDYQAEDLAGKEAKFVTTIHEVKEKEVPALDDELAKDIDEEVETLDELKEKYRKELSEAKETAYKDAVEAAAIDQAVANAEIVDLPAEMVHEEVHRAVNEFLGNMQRQGISPDMYFQITGTTQEDLHKQYEADAESRTKTNLVVEAVAKAEGFEASAEEIEAEVTSLASDYNMEVERVRQLLSEDMLKHDIAIKKAVELITSTAKVK.

In terms of domain architecture, PPIase FKBP-type spans 163-248 (GDTVVIDFVG…IHEVKEKEVP (86 aa)).

The protein belongs to the FKBP-type PPIase family. Tig subfamily.

The protein resides in the cytoplasm. The catalysed reaction is [protein]-peptidylproline (omega=180) = [protein]-peptidylproline (omega=0). Its function is as follows. Involved in protein export. Acts as a chaperone by maintaining the newly synthesized protein in an open conformation. Functions as a peptidyl-prolyl cis-trans isomerase. This is Trigger factor from Streptococcus sanguinis (strain SK36).